A 993-amino-acid chain; its full sequence is Replication protein 1a (993 aa).

The segment at 51–409 is methyltransferase; it reads NVLGVKDSEV…TIVINGMSMQ (359 aa). One can recognise an Alphavirus-like MT domain in the interval 72–290; sequence HLTQQEFAPH…HDWENIKSFL (219 aa). The disordered stretch occupies residues 538–561; the sequence is AQPVSEVSDSPETSSQTPDDTADV. The span at 542 to 556 shows a compositional bias: polar residues; sequence SEVSDSPETSSQTPD. The region spanning 687-838 is the (+)RNA virus helicase ATP-binding domain; sequence CVICNSESLS…KIIPDETSDA (152 aa). An ATP-dependent helicase region spans residues 712–975; the sequence is VDGVAGCGKT…LTRHKVTFRY (264 aa). Residue 714-721 participates in ATP binding; that stretch reads GVAGCGKT. One can recognise a (+)RNA virus helicase C-terminal domain in the interval 839–993; it reads DTTFRSPQDV…DLIAECVARA (155 aa).

Belongs to the bromoviridae replication protein 1a family. In terms of assembly, interacts with RNA-directed RNA polymerase 2a.

The protein localises to the host endoplasmic reticulum membrane. Involved in the virus replication. Contains a helicase domain and a methyltransferase domain. The methyltransferase domain is probably involved in viral RNA capping. Involved in the formation of ER membrane spherular invaginations in which RNA replication complexes form. The chain is Replication protein 1a from Cucumber mosaic virus (strain FNY) (CMV).